A 264-amino-acid chain; its full sequence is 3-methyl-2-oxobutanoate hydroxymethyltransferase (264 aa).

Asp-45 and Asp-84 together coordinate Mg(2+). 3-methyl-2-oxobutanoate is bound by residues 45–46, Asp-84, and Lys-112; that span reads DS. Glu-114 serves as a coordination point for Mg(2+). Glu-181 (proton acceptor) is an active-site residue.

It belongs to the PanB family. Homodecamer; pentamer of dimers. Mg(2+) serves as cofactor.

It is found in the cytoplasm. It catalyses the reaction 3-methyl-2-oxobutanoate + (6R)-5,10-methylene-5,6,7,8-tetrahydrofolate + H2O = 2-dehydropantoate + (6S)-5,6,7,8-tetrahydrofolate. It functions in the pathway cofactor biosynthesis; (R)-pantothenate biosynthesis; (R)-pantoate from 3-methyl-2-oxobutanoate: step 1/2. Functionally, catalyzes the reversible reaction in which hydroxymethyl group from 5,10-methylenetetrahydrofolate is transferred onto alpha-ketoisovalerate to form ketopantoate. The polypeptide is 3-methyl-2-oxobutanoate hydroxymethyltransferase (Edwardsiella ictaluri (strain 93-146)).